We begin with the raw amino-acid sequence, 629 residues long: Keratin, type II cytoskeletal 3 (629 aa).

Residues 1–182 are head; that stretch reads MNRQVCKTSG…DPQIGQVRAQ (182 aa). Phosphoserine occurs at positions 13 and 62. Residues 183–218 form a coil 1A region; it reads EREQIKTLNNKFASFIDKVRFLEQQNKVLETKWELL. Residues 183–498 form the IF rod domain; it reads EREQIKTLNN…KLLEGEESRM (316 aa). Residues 219–239 form a linker 1 region; sequence QRQGPNSVTGTNNLEPLFENR. A coil 1B region spans residues 240–331; that stretch reads INYLRSYLDS…TLYDAELSQM (92 aa). K281 carries the post-translational modification N6,N6-dimethyllysine. The tract at residues 332–355 is linker 12; sequence QSHVSDMSVVLSMDNNRSLDLDSI. Position 349 is a phosphoserine (S349). The interval 356-494 is coil 2; the sequence is IAEVRAQYED…ATYRKLLEGE (139 aa). The interval 495–629 is tail; sequence ESRMSGECQS…FSQSSQRYSR (135 aa). Residues 603-629 form a disordered region; sequence SGGGFSSGSSSRGSSVKFSQSSQRYSR. The segment covering 618–629 has biased composition (polar residues); the sequence is VKFSQSSQRYSR.

Belongs to the intermediate filament family. As to quaternary structure, heterotetramer of two type I and two type II keratins. Keratin-3 associates with keratin-12. Cornea specific. Expressed in the basal cells of corneal epithelium and stroma. Also expressed in esophageal epithelium.

The chain is Keratin, type II cytoskeletal 3 (KRT3) from Oryctolagus cuniculus (Rabbit).